A 376-amino-acid chain; its full sequence is Zinc transporter 7 (376 aa).

At 1–37 (MLPLSIKDDEYKPPKFNLFGKISGWFRSILSDKTSRN) the chain is on the cytoplasmic side. The chain crosses the membrane as a helical span at residues 38–58 (LFFFLCLNLSFAFVELLYGIW). At 59-67 (SNCLGLISD) the chain is on the lumenal side. A helical membrane pass occupies residues 68–88 (SFHMFFDSTAILAGLAASVIS). Topologically, residues 89-102 (KWRDNDAFSYGYVR) are cytoplasmic. A helical membrane pass occupies residues 103-123 (AEVLAGFVNGLFLIFTAFFIF). Residues 124–140 (SEGVERALAPPDVHHER) lie on the Lumenal side of the membrane. The chain crosses the membrane as a helical span at residues 141-161 (LLLVSILGFVVNLIGIFVFKH). Residues 161 to 218 (HGGHGHSHGSGHGHSHSLFNGALDQAHGHVDHCHSHEVKHGAAHSHDHAHGHGHFHSH) form a his-rich loop region. The Cytoplasmic segment spans residues 162 to 236 (GGHGHSHGSG…TGPSRQILQG (75 aa)). The segment covering 194–222 (HSHEVKHGAAHSHDHAHGHGHFHSHDGPS) has biased composition (basic and acidic residues). Positions 194–226 (HSHEVKHGAAHSHDHAHGHGHFHSHDGPSLKET) are disordered. A helical membrane pass occupies residues 237–257 (VFLHILADTLGSIGVIASAIM). The Lumenal portion of the chain corresponds to 258–262 (MQNFG). A helical membrane pass occupies residues 263-283 (LMIADPICSILIAILIVVSVI). Topologically, residues 284–376 (PLLRESVGIL…LYVQIDFAAM (93 aa)) are cytoplasmic.

It belongs to the cation diffusion facilitator (CDF) transporter (TC 2.A.4) family. SLC30A subfamily. As to quaternary structure, homooligomer. Highly expressed in megakaryocytes and other bone marrow cells and in the epithelium of the small intestine. Expressed in testis (in Leydig cells), adrenal gland (in adrenal medula, zona fasciculata and zona of reticularis), and pituitary gland (in somatotropic cells).

It is found in the golgi apparatus membrane. The protein localises to the cytoplasmic vesicle. It localises to the golgi apparatus. Its subcellular location is the trans-Golgi network. The protein resides in the sarcoplasmic reticulum. It is found in the mitochondrion. The catalysed reaction is Zn(2+)(in) = Zn(2+)(out). Zinc ion transporter mediating zinc entry from the cytosol into the lumen of organelles along the secretory pathway. By contributing to zinc ion homeostasis within the early secretory pathway, regulates the activation and folding of enzymes like alkaline phosphatases. In Homo sapiens (Human), this protein is Zinc transporter 7.